Here is a 761-residue protein sequence, read N- to C-terminus: Xaa-Pro dipeptidyl-peptidase (761 aa).

Active-site charge relay system residues include Ser-349, Asp-469, and His-499.

It belongs to the peptidase S15 family. In terms of assembly, homodimer.

The protein resides in the cytoplasm. It catalyses the reaction Hydrolyzes Xaa-Pro-|- bonds to release unblocked, N-terminal dipeptides from substrates including Ala-Pro-|-p-nitroanilide and (sequentially) Tyr-Pro-|-Phe-Pro-|-Gly-Pro-|-Ile.. Functionally, removes N-terminal dipeptides sequentially from polypeptides having unsubstituted N-termini provided that the penultimate residue is proline. In Streptococcus equi subsp. zooepidemicus (strain H70), this protein is Xaa-Pro dipeptidyl-peptidase.